The following is a 356-amino-acid chain: Histidinol-phosphate aminotransferase (356 aa).

Position 214 is an N6-(pyridoxal phosphate)lysine (K214).

It belongs to the class-II pyridoxal-phosphate-dependent aminotransferase family. Histidinol-phosphate aminotransferase subfamily. Homodimer. The cofactor is pyridoxal 5'-phosphate.

The enzyme catalyses L-histidinol phosphate + 2-oxoglutarate = 3-(imidazol-4-yl)-2-oxopropyl phosphate + L-glutamate. It participates in amino-acid biosynthesis; L-histidine biosynthesis; L-histidine from 5-phospho-alpha-D-ribose 1-diphosphate: step 7/9. This Aromatoleum aromaticum (strain DSM 19018 / LMG 30748 / EbN1) (Azoarcus sp. (strain EbN1)) protein is Histidinol-phosphate aminotransferase.